A 275-amino-acid polypeptide reads, in one-letter code: Digeranylgeranylglyceryl phosphate synthase (275 aa).

8 consecutive transmembrane segments (helical) span residues 12–32 (VHNVVGSAVSAFMGYVIATTW), 35–55 (TPLFFLPLLVVSLIAAGGYVI), 88–108 (IVLFAVGLIISIPLGLIPFGF), 125–145 (KLGLVGNFIVALTSALSAYYG), 146–166 (GLASGSLLGNFIIPTIYIFFF), 200–220 (WIIAKIILGILIFTSPLPYFL), 224–244 (VIYLIGILALDVLLVYILILH), and 255–275 (SLMKIYAIGTLIVFTLGSLRI).

The protein belongs to the UbiA prenyltransferase family. DGGGP synthase subfamily. Mg(2+) serves as cofactor.

Its subcellular location is the cell membrane. The catalysed reaction is sn-3-O-(geranylgeranyl)glycerol 1-phosphate + (2E,6E,10E)-geranylgeranyl diphosphate = 2,3-bis-O-(geranylgeranyl)-sn-glycerol 1-phosphate + diphosphate. It participates in membrane lipid metabolism; glycerophospholipid metabolism. Functionally, prenyltransferase that catalyzes the transfer of the geranylgeranyl moiety of geranylgeranyl diphosphate (GGPP) to the C2 hydroxyl of (S)-3-O-geranylgeranylglyceryl phosphate (GGGP). This reaction is the second ether-bond-formation step in the biosynthesis of archaeal membrane lipids. The chain is Digeranylgeranylglyceryl phosphate synthase from Sulfolobus acidocaldarius (strain ATCC 33909 / DSM 639 / JCM 8929 / NBRC 15157 / NCIMB 11770).